A 496-amino-acid chain; its full sequence is Omega-crystallin (496 aa).

Belongs to the aldehyde dehydrogenase family. In terms of tissue distribution, lens.

In terms of biological role, omega-crystallins are structural components of squids and octopi eye lens. Contains relatively little if any DHAL activity. The polypeptide is Omega-crystallin (Enteroctopus dofleini (North Pacific giant octopus)).